Reading from the N-terminus, the 966-residue chain is MSETNPAATAPVSADAAPHRYTAAMAAEIEARWQDFWDAEGTYAAPNPKGDLAGDPELVAKPKKFIMDMFPYPSGAGLHVGHPLGYIATDVFARFQRMTGHNVLHTLGFDAFGLPAEQYAVQTGTHPRVSTEANMKNMQSQLRRLGLGHDRRRSFATIDPEYYKWTQWIFLQIFNSWYDDEAKKARPIAELVAQFASGEREVPGHAGRAWSSLSEAERADVLGEYRLAYASDAPVNWCPGLGTVLANEEVTADGRSERGNFPVFKSKLRQWNMRITAYADRLLDDLDQLDWPEAIKLQQRNWIGRSEGARVDFPVDGERITVFTTRPDTLFGATYMVLAPEHPLVEKFTPAVWPEGTRDAWTGGHATPTEAVAAYRAQAASKSDVERQAEAKDKTGVFIGAYATNPVNGEQVPVFVADYVLMGYGTGAIMAVPAHDSRDFEFARAFELPVRCVVEPTDGRGTDTSTWDEAFASYDAKIVNSSGTDVSLDGLGVVEAKERVTEWLERAGAGAGTVNFRLRDWLFSRQRYWGEPFPIVYDEDGIAHPLPDSMLPLELPEVEDYSPRTFDPDDADTKPETPLSRNEDWVHVTLDLGDGRGPRKYRRETNTMPNWAGSCWYELRYLDPHNGERLVDPEIEQYWMGPREGLPHGGVDLYVGGAEHAVLHLLYARFWSKVLFDLGHVSSAEPFHKLFNQGMIQAYVYRDSRGIAVPAAEVEERDGAYYYQGEKVSRLLGKMGKSLKNAVTPDEICAEYGADTLRLYEMAMGPLDVSRPWDTRAVVGQFRLLQRLWRNVVDEDTGELSVADVAESDIDAGTLRALHKAVDGVRQDLEGMRFNTAIAKVTELNNHLTKAGGPVPRSVAERLVLLVAPLAPHVAEELWRKLGHESSVVHEDFPVADPAYVVDETVTCVVQIKGKVKARLEVAPSISEDDLEKAALADEKVVAALGGAGIRKVIVRAPKLVNIVPA.

The 'HIGH' region motif lies at 71–82 (PYPSGAGLHVGH). The interval 561–580 (YSPRTFDPDDADTKPETPLS) is disordered. The span at 571–580 (ADTKPETPLS) shows a compositional bias: basic and acidic residues. Positions 734-738 (KMGKS) match the 'KMSKS' region motif. Lys737 serves as a coordination point for ATP.

The protein belongs to the class-I aminoacyl-tRNA synthetase family.

Its subcellular location is the cytoplasm. The catalysed reaction is tRNA(Leu) + L-leucine + ATP = L-leucyl-tRNA(Leu) + AMP + diphosphate. The sequence is that of Leucine--tRNA ligase from Streptomyces coelicolor (strain ATCC BAA-471 / A3(2) / M145).